A 391-amino-acid chain; its full sequence is F-box only protein 5 (391 aa).

The F-box domain maps to 198 to 245 (AELFHRDFKHLLTKILRHLSAMDLINVISVSTTWRKILQKDNSAYNSY). The segment at 318-366 (CLKVCVDCSSPAKYDPYLHRATCTRESCKFDFCTLCSCKYHGSKCCQTS) adopts a ZBR-type zinc-finger fold. Positions 322, 325, 340, 345, 350, 353, 358, and 363 each coordinate Zn(2+). A disordered region spans residues 365-391 (TSKPRSYRVPSEPLPGSKKSKQNLRRL). Positions 382 to 391 (KKSKQNLRRL) are enriched in basic residues.

Part of a SCF (SKP1-cullin-F-box) protein ligase complex. Interacts with btrc. Interacts with skp1. Interacts with cdc20. Interacts with pin1; stabilizes fbxo5 by preventing its association with btrc in an isomerization-dependent pathway; this interaction is present during G2 phase and prevents fbxo5 degradation. Interacts with plk1. In terms of processing, proteolysed; proteolysis is induced by both cyclin B-cdk1 and cyclin A-cdk1/2 complex through probable phosphorylation. Proteolysis is inhibited by pin1 during G2.

Its subcellular location is the nucleus. It localises to the cytoplasm. The protein resides in the cytoskeleton. The protein localises to the spindle. It is found in the microtubule organizing center. Its subcellular location is the centrosome. It participates in protein modification; protein ubiquitination. In terms of biological role, regulates progression through early mitosis by inhibiting the anaphase promoting complex/cyclosome (APC). Binds to the APC activators cdc20 to prevent APC activation. Can also bind directly to the APC to inhibit substrate-binding. Required to arrest unfertilized eggs at metaphase of meiosis II, by preventing their release from metaphase of meiosis II, through inhibition of APC-dependent cyclin B destruction leading to stabilization of cyclin B-cdk1 complex activity. This Xenopus tropicalis (Western clawed frog) protein is F-box only protein 5.